We begin with the raw amino-acid sequence, 270 residues long: Endochitinase PR4 (270 aa).

The N-terminal stretch at 1-23 is a signal peptide; the sequence is MGNKLVLVLVAVALVMGPKNVSA. The Chitin-binding type-1 domain maps to 24–58; that stretch reads QNCGCAEGLCCSQYGYCGTGEDYCGTGCQQGPCTT. 7 cysteine pairs are disulfide-bonded: Cys-26–Cys-34, Cys-28–Cys-40, Cys-33–Cys-47, Cys-51–Cys-56, Cys-88–Cys-137, Cys-150–Cys-160, and Cys-238–Cys-270. Glu-132 acts as the Proton donor in catalysis.

The protein belongs to the glycosyl hydrolase 19 family. Chitinase class I subfamily.

It catalyses the reaction Random endo-hydrolysis of N-acetyl-beta-D-glucosaminide (1-&gt;4)-beta-linkages in chitin and chitodextrins.. Defense against chitin-containing fungal pathogens. The chain is Endochitinase PR4 (CHI4) from Phaseolus vulgaris (Kidney bean).